A 377-amino-acid polypeptide reads, in one-letter code: NADH dehydrogenase [ubiquinone] 1 alpha subcomplex subunit 9, mitochondrial (377 aa).

The transit peptide at Met1–Gln35 directs the protein to the mitochondrion. Lys175 bears the N6-succinyllysine mark. 2 positions are modified to N6-acetyllysine: Lys189 and Lys370.

It belongs to the complex I NDUFA9 subunit family. In terms of assembly, complex I is composed of 45 different subunits. This a component of the hydrophobic protein fraction. Interacts with BLOC1S1. Interacts with SLC2A4. Interacts with CLOCK. Interacts with RAB5IF. The cofactor is FAD. Post-translationally, acetylated on lysine residues. BLOC1S1 is required for acetylation.

The protein resides in the mitochondrion matrix. Functionally, accessory subunit of the mitochondrial membrane respiratory chain NADH dehydrogenase (Complex I), that is believed not to be involved in catalysis. Complex I functions in the transfer of electrons from NADH to the respiratory chain. The immediate electron acceptor for the enzyme is believed to be ubiquinone. This Gorilla gorilla gorilla (Western lowland gorilla) protein is NADH dehydrogenase [ubiquinone] 1 alpha subcomplex subunit 9, mitochondrial (NDUFA9).